Consider the following 374-residue polypeptide: Translocating chain-associated membrane protein 1 (374 aa).

The Cytoplasmic segment spans residues 2–29 (AIRKKSTKSPPVLSHEFILQNHADIVSC). A helical membrane pass occupies residues 30–50 (VAMVFLLGLMFEITAKASIIF). Residues 51–76 (VTLQYNVTLPATEEQATESTSLYYYG) lie on the Lumenal side of the membrane. A glycan (N-linked (GlcNAc...) asparagine) is linked at N56. A helical transmembrane segment spans residues 77–97 (IKDLATVFFYMLVAIIIHAII). The Cytoplasmic segment spans residues 98 to 121 (QEYVLDKINRRMHFSKTKHSKFNE). In terms of domain architecture, TLC spans 117–326 (SKFNESGQLS…NFQLRRWREH (210 aa)). The helical transmembrane segment at 122–142 (SGQLSAFYLFSCIWGTFILIS) threads the bilayer. Residues 143 to 159 (ENYISDPTILWRAYPHN) are Lumenal-facing. Residues 160–180 (LMTFQMKFFYIAQLAYWFHAF) traverse the membrane as a helical segment. The Cytoplasmic segment spans residues 181–192 (PELYFQKTKKED). Residues 193 to 213 (IPRQLVYIGLYLFHIAGAYLL) form a helical membrane-spanning segment. At 214 to 217 (NLNH) the chain is on the lumenal side. The chain crosses the membrane as a helical span at residues 218 to 238 (LGLVLLVLHYFVEFLFHISRL). The Cytoplasmic portion of the chain corresponds to 239–251 (FYFSDEKYQKGFS). A helical membrane pass occupies residues 252-272 (LWAVLFVLGRLLTLILSVLTV). Residues 273–297 (GFGLARAENQKLDFSAGNFNVLAVR) are Lumenal-facing. A helical membrane pass occupies residues 298 to 318 (IAVLASICITQAFMMWKFINF). Residues 319-374 (QLRRWREHSTFQAPVVKKKPTVTKGRSSRKGTENGVNGTVTSNGADSPRNRKEKSS) are Cytoplasmic-facing. Positions 334–347 (VKKKPTVTKGRSSR) are enriched in basic residues. The tract at residues 334–374 (VKKKPTVTKGRSSRKGTENGVNGTVTSNGADSPRNRKEKSS) is disordered. A compositionally biased stretch (polar residues) spans 352-363 (NGVNGTVTSNGA). At S365 the chain carries Phosphoserine.

It belongs to the TRAM family. Interacts with SEC61B. May interact with Derlin-1/DERL1. N-glycosylated.

The protein localises to the endoplasmic reticulum membrane. Involved in the translocation of nascent protein chains into or through the endoplasmic reticulum (ER) membrane by facilitating the proper chain positioning at the SEC61 channel. Regulates the exposure of nascent secretory protein chain to the cytosol during translocation into the ER. May affect the phospholipid bilayer in the vicinity of the lateral gate of the SEC61 channel, thereby facilitating ER protein transport. Intimately associates with transmembrane (TM) domain of nascent membrane proteins during the entire integration process into the ER membrane. Associates with the second TM domain of G-protein-coupled receptor opsin/OPSD nascent chain in the ER membrane, which may facilitate its integration into the membrane. Under conditions of ER stress, participates in the disposal of misfolded ER membrane proteins during the unfolded protein response (UPR), an integrated stress response (ISR) pathway, by selectively retrotranslocating misfolded ER-membrane proteins from the ER into the cytosol where they are ubiquitinated and degraded by the proteasome. The sequence is that of Translocating chain-associated membrane protein 1 (TRAM1) from Canis lupus familiaris (Dog).